Consider the following 498-residue polypeptide: Pyridine nucleotide-disulfide oxidoreductase domain-containing protein 1 (498 aa).

Position 1 is an N-acetylmethionine (Met-1).

It belongs to the class-I pyridine nucleotide-disulfide oxidoreductase family. PYROXD1 subfamily. FAD serves as cofactor.

Its subcellular location is the nucleus. The protein resides in the cytoplasm. It localises to the myofibril. The protein localises to the sarcomere. Probable FAD-dependent oxidoreductase; involved in the cellular oxidative stress response. Required for normal sarcomere structure and muscle fiber integrity. In Mus musculus (Mouse), this protein is Pyridine nucleotide-disulfide oxidoreductase domain-containing protein 1 (Pyroxd1).